We begin with the raw amino-acid sequence, 119 residues long: Ribonuclease P protein component (119 aa).

This sequence belongs to the RnpA family. As to quaternary structure, consists of a catalytic RNA component (M1 or rnpB) and a protein subunit.

It catalyses the reaction Endonucleolytic cleavage of RNA, removing 5'-extranucleotides from tRNA precursor.. RNaseP catalyzes the removal of the 5'-leader sequence from pre-tRNA to produce the mature 5'-terminus. It can also cleave other RNA substrates such as 4.5S RNA. The protein component plays an auxiliary but essential role in vivo by binding to the 5'-leader sequence and broadening the substrate specificity of the ribozyme. The polypeptide is Ribonuclease P protein component (Pediococcus pentosaceus (strain ATCC 25745 / CCUG 21536 / LMG 10740 / 183-1w)).